A 953-amino-acid polypeptide reads, in one-letter code: Catenin alpha-2 (953 aa).

The residue at position 632 (Thr-632) is a Phosphothreonine. Phosphoserine is present on residues Ser-640, Ser-651, and Ser-901. Residues Glu-912–Thr-927 are compositionally biased toward basic and acidic residues. A disordered region spans residues Glu-912–Ser-939. Residues Arg-928–Ile-938 show a composition bias toward basic residues. Ser-939 bears the Phosphoserine mark.

This sequence belongs to the vinculin/alpha-catenin family. Interacts with CDH1 and CDH2. Interacts with ZNF639; recruits CTNNA2 to the nucleus. Interacts with F-actin. In terms of tissue distribution, expressed almost exclusively in the nervous system.

The protein localises to the cell membrane. It localises to the cytoplasm. It is found in the cytoskeleton. The protein resides in the cell junction. Its subcellular location is the adherens junction. The protein localises to the cell projection. It localises to the axon. It is found in the nucleus. May function as a linker between cadherin adhesion receptors and the cytoskeleton to regulate cell-cell adhesion and differentiation in the nervous system. Required for proper regulation of cortical neuronal migration and neurite growth. It acts as a negative regulator of Arp2/3 complex activity and Arp2/3-mediated actin polymerization. It thereby suppresses excessive actin branching which would impair neurite growth and stability. Regulates morphological plasticity of synapses and cerebellar and hippocampal lamination during development. Functions in the control of startle modulation. This is Catenin alpha-2 (Ctnna2) from Mus musculus (Mouse).